An 880-amino-acid polypeptide reads, in one-letter code: A-adding tRNA nucleotidyltransferase (880 aa).

CBS domains follow at residues 315-373 (MSSP…NLPV) and 377-435 (MHTE…RNAE). Position 487–490 (487–490 (GFVR)) interacts with ATP. Mg(2+) contacts are provided by D500 and D502. Residues 574-575 (RD), N579, 619-628 (DPTRVFRAIR), R632, and R661 each bind ATP.

Belongs to the tRNA nucleotidyltransferase/poly(A) polymerase family. Requires Mg(2+) as cofactor.

The catalysed reaction is a tRNA with a 3' CC end + ATP = a tRNA with a 3' CCA end + diphosphate. Functionally, tRNA nucleotidyltransferase involved in the synthesis of the tRNA CCA terminus. Adds the terminal adenosine residue to tRNA. In Geobacter sulfurreducens (strain ATCC 51573 / DSM 12127 / PCA), this protein is A-adding tRNA nucleotidyltransferase.